A 157-amino-acid polypeptide reads, in one-letter code: uncharacterized protein (157 aa).

This is an uncharacterized protein from Rickettsia prowazekii (strain Madrid E).